The following is a 483-amino-acid chain: ATP synthase subunit beta (483 aa).

ATP is bound at residue 162–169 (GGAGVGKT).

The protein belongs to the ATPase alpha/beta chains family. F-type ATPases have 2 components, CF(1) - the catalytic core - and CF(0) - the membrane proton channel. CF(1) has five subunits: alpha(3), beta(3), gamma(1), delta(1), epsilon(1). CF(0) has four main subunits: a(1), b(1), b'(1) and c(9-12).

It is found in the cellular thylakoid membrane. It carries out the reaction ATP + H2O + 4 H(+)(in) = ADP + phosphate + 5 H(+)(out). Produces ATP from ADP in the presence of a proton gradient across the membrane. The catalytic sites are hosted primarily by the beta subunits. The chain is ATP synthase subunit beta from Rippkaea orientalis (strain PCC 8801 / RF-1) (Cyanothece sp. (strain PCC 8801)).